A 428-amino-acid polypeptide reads, in one-letter code: Light-independent protochlorophyllide reductase subunit N (428 aa).

Residues C31, C56, and C117 each coordinate [4Fe-4S] cluster.

Belongs to the BchN/ChlN family. Protochlorophyllide reductase is composed of three subunits; BchL, BchN and BchB. Forms a heterotetramer of two BchB and two BchN subunits. [4Fe-4S] cluster serves as cofactor.

It carries out the reaction chlorophyllide a + oxidized 2[4Fe-4S]-[ferredoxin] + 2 ADP + 2 phosphate = protochlorophyllide a + reduced 2[4Fe-4S]-[ferredoxin] + 2 ATP + 2 H2O. It functions in the pathway porphyrin-containing compound metabolism; bacteriochlorophyll biosynthesis (light-independent). Component of the dark-operative protochlorophyllide reductase (DPOR) that uses Mg-ATP and reduced ferredoxin to reduce ring D of protochlorophyllide (Pchlide) to form chlorophyllide a (Chlide). This reaction is light-independent. The NB-protein (BchN-BchB) is the catalytic component of the complex. The polypeptide is Light-independent protochlorophyllide reductase subunit N (Rhodopseudomonas palustris (strain HaA2)).